Consider the following 289-residue polypeptide: MKKSVRSPGSATVINAIATGFGAAFGIGLDIKCCANTQNSSITCSNDVGAPTTLMEICAKKTFEKYGISSDDFGMNFKTESELPMASGLSSSSALSNAVVSISSKIIAEEFNLMPLDDLEIINLAIDASLEAKVTITGSFDDATASYFGGVVVTDNKNRKFIIKEKMEEYPVLVYMPNFGSKSGSSDVGRMKVLSPLVETAFGLARSGDYFKALNLNGLIYANTLGFDSNIAIDALEVGAIASGLSGTGSSFVAICEDEAIDDIKETWSKYEGRVIETKVDNIGCQFIG.

84-94 (PMASGLSSSSA) is an ATP binding site.

Belongs to the GHMP kinase family. Archaeal shikimate kinase subfamily.

It localises to the cytoplasm. The enzyme catalyses shikimate + ATP = 3-phosphoshikimate + ADP + H(+). It participates in metabolic intermediate biosynthesis; chorismate biosynthesis; chorismate from D-erythrose 4-phosphate and phosphoenolpyruvate: step 5/7. The chain is Shikimate kinase from Methanobrevibacter smithii (strain ATCC 35061 / DSM 861 / OCM 144 / PS).